Here is a 155-residue protein sequence, read N- to C-terminus: Large ribosomal subunit protein uL30 (155 aa).

It belongs to the universal ribosomal protein uL30 family. As to quaternary structure, part of the 50S ribosomal subunit.

The chain is Large ribosomal subunit protein uL30 from Nanoarchaeum equitans (strain Kin4-M).